The following is a 144-amino-acid chain: Large ribosomal subunit protein uL15 (144 aa).

The disordered stretch occupies residues methionine 1–glycine 52. Over residues arginine 21–cysteine 31 the composition is skewed to gly residues.

It belongs to the universal ribosomal protein uL15 family. In terms of assembly, part of the 50S ribosomal subunit.

Its function is as follows. Binds to the 23S rRNA. The sequence is that of Large ribosomal subunit protein uL15 from Nitrosococcus oceani (strain ATCC 19707 / BCRC 17464 / JCM 30415 / NCIMB 11848 / C-107).